We begin with the raw amino-acid sequence, 234 residues long: LRP chaperone MESD (234 aa).

Residues 1–33 form the signal peptide; the sequence is MAASRWARKAVVLLCASDLLLLLLLLPPPGSCA. The segment at 1–164 is chaperone domain; the sequence is MAASRWARKA…DRAIFMLRDG (164 aa). 2 disordered regions span residues 31–95 and 187–234; these read SCAA…DFSK and GQVY…REDL. Residues 54 to 70 are compositionally biased toward basic and acidic residues; that stretch reads DIRDYNDADMARLLEQW. Acidic residues predominate over residues 71–80; the sequence is EKDDDIEEGD. Residues 165-204 are escort domain; sequence SYAWEIKDFLVGQDRCADVTLEGQVYPGKGGGSKEKNKTK. The segment covering 196–234 has biased composition (basic and acidic residues); it reads GSKEKNKTKQDKGKKKKEGDLKSRSSKEENRAGNKREDL. A glycan (N-linked (GlcNAc...) asparagine) is linked at asparagine 201. Residues 231-234 carry the Prevents secretion from ER motif; the sequence is REDL.

Belongs to the MESD family. In terms of assembly, monomer. Interacts with LRP5; the interaction prevents LRP5 from forming aggregates and chaperones LRP6 to the plasma membrane. Interacts with LRP6; the interaction prevents LRP6 from forming aggregates and chaperones LRP6 to the plasma membrane. Interacts with LRP4; the interaction promotes glycosylation of LRP4 and its cell-surface expression.

It is found in the endoplasmic reticulum. Functionally, chaperone specifically assisting the folding of beta-propeller/EGF modules within the family of low-density lipoprotein receptors (LDLRs). Acts as a modulator of the Wnt pathway through chaperoning the coreceptors of the canonical Wnt pathway, LRP5 and LRP6, to the plasma membrane. Essential for specification of embryonic polarity and mesoderm induction. Plays an essential role in neuromuscular junction (NMJ) formation by promoting cell-surface expression of LRP4. May regulate phagocytosis of apoptotic retinal pigment epithelium (RPE) cells. The sequence is that of LRP chaperone MESD from Homo sapiens (Human).